We begin with the raw amino-acid sequence, 190 residues long: Endoribonuclease YbeY (190 aa).

The disordered stretch occupies residues 1 to 25 (MSQPRPGHRPDCNGADPDSNFASMT). 3 residues coordinate Zn(2+): H147, H151, and H157.

This sequence belongs to the endoribonuclease YbeY family. The cofactor is Zn(2+).

The protein resides in the cytoplasm. In terms of biological role, single strand-specific metallo-endoribonuclease involved in late-stage 70S ribosome quality control and in maturation of the 3' terminus of the 16S rRNA. The protein is Endoribonuclease YbeY of Rhodopseudomonas palustris (strain ATCC BAA-98 / CGA009).